The chain runs to 1144 residues: Formin-like protein 18 (1144 aa).

A Phosphatase tensin-type domain is found at 17–193 (LEISERVYVF…QYISRRNVGS (177 aa)). The Phosphocysteine intermediate role is filled by C126. The 140-residue stretch at 199–338 (DQALTLDCVN…FSAEVIFSEM (140 aa)) folds into the C2 tensin-type domain. Disordered stretches follow at residues 429–463 (ISENIVSSPDTSSPEKEKDTMSSHKSYADPNSILK) and 482–729 (KIFS…KGRG). The segment covering 441–450 (SPEKEKDTMS) has biased composition (basic and acidic residues). The span at 491–522 (SPVTSPLPNRSPTQGSPASISRFHSSPSSLGI) shows a compositional bias: polar residues. Over residues 526–536 (LHDHGSCKDEE) the composition is skewed to basic and acidic residues. The span at 538–548 (TSSSPASPSIS) shows a compositional bias: low complexity. Polar residues predominate over residues 555–580 (PLTSSQPKKASPQCPQSPTPVHSNGP). A compositionally biased stretch (pro residues) spans 603 to 613 (RPPPPPPPPPI). Low complexity predominate over residues 614–629 (SSLRSTPSPSSTSNSI). A compositionally biased stretch (pro residues) spans 633 to 643 (GPPPPPPPPPL). The span at 644 to 653 (QSHRSALSSS) shows a compositional bias: low complexity. Positions 669 to 678 (NPPPPPPPPL) are enriched in pro residues. Positions 679 to 695 (HSNSRMGAPTSSLVLKS) are enriched in low complexity. A compositionally biased stretch (pro residues) spans 696–705 (PPVPPPPAPA). The region spanning 735–1135 (KGQGQTRKAN…RAQKEAENEK (401 aa)) is the FH2 domain.

Belongs to the formin-like family. Class-II subfamily.

The sequence is that of Formin-like protein 18 (FH18) from Arabidopsis thaliana (Mouse-ear cress).